The following is a 294-amino-acid chain: Probable 2-(5''-triphosphoribosyl)-3'-dephosphocoenzyme-A synthase (294 aa).

The protein belongs to the CitG/MdcB family.

The catalysed reaction is 3'-dephospho-CoA + ATP = 2'-(5''-triphospho-alpha-D-ribosyl)-3'-dephospho-CoA + adenine. This Streptococcus pyogenes serotype M18 (strain MGAS8232) protein is Probable 2-(5''-triphosphoribosyl)-3'-dephosphocoenzyme-A synthase.